Reading from the N-terminus, the 408-residue chain is Peptidase T (408 aa).

His78 serves as a coordination point for Zn(2+). Asp80 is a catalytic residue. Asp140 lines the Zn(2+) pocket. Glu173 acts as the Proton acceptor in catalysis. Zn(2+) is bound by residues Glu174, Asp196, and His379.

It belongs to the peptidase M20B family. Requires Zn(2+) as cofactor.

It is found in the cytoplasm. It carries out the reaction Release of the N-terminal residue from a tripeptide.. Its function is as follows. Cleaves the N-terminal amino acid of tripeptides. This Citrobacter koseri (strain ATCC BAA-895 / CDC 4225-83 / SGSC4696) protein is Peptidase T.